The primary structure comprises 102 residues: YcgL domain-containing protein MS1047 (102 aa).

Residues 1–85 form the YcgL domain; sequence MLCAIYKSKK…KQESLFEQFK (85 aa).

In Mannheimia succiniciproducens (strain KCTC 0769BP / MBEL55E), this protein is YcgL domain-containing protein MS1047.